Reading from the N-terminus, the 243-residue chain is MNNILLGVNIDHIATLRNARGTRYPDPVHAAEVAERAGADGITVHLREDRRHINDRDVRILKETIQTRMNLEMAVTDEMVSIALDTKPEFVCLVPEKREELTTEGGLDVAGQLEKIKAATQKLTDAGIKVSLFIDADRAQIDATLACGAPFVELHTGHYADAETEEAQQAELEKIASAATYAHGLGIKVNAGHGLTYHNVKPIAALPELYELNIGHSIISRAAFDGLNKAVADMKVEMLDARR.

Residue Asn9 participates in 3-amino-2-oxopropyl phosphate binding. 11–12 provides a ligand contact to 1-deoxy-D-xylulose 5-phosphate; that stretch reads DH. Arg20 lines the 3-amino-2-oxopropyl phosphate pocket. The Proton acceptor role is filled by His45. 1-deoxy-D-xylulose 5-phosphate-binding residues include Arg47 and His52. Glu72 acts as the Proton acceptor in catalysis. Thr102 contributes to the 1-deoxy-D-xylulose 5-phosphate binding site. His193 functions as the Proton donor in the catalytic mechanism. Residues Gly194 and 215 to 216 each bind 3-amino-2-oxopropyl phosphate; that span reads GH.

This sequence belongs to the PNP synthase family. Homooctamer; tetramer of dimers.

The protein localises to the cytoplasm. It catalyses the reaction 3-amino-2-oxopropyl phosphate + 1-deoxy-D-xylulose 5-phosphate = pyridoxine 5'-phosphate + phosphate + 2 H2O + H(+). It participates in cofactor biosynthesis; pyridoxine 5'-phosphate biosynthesis; pyridoxine 5'-phosphate from D-erythrose 4-phosphate: step 5/5. Functionally, catalyzes the complicated ring closure reaction between the two acyclic compounds 1-deoxy-D-xylulose-5-phosphate (DXP) and 3-amino-2-oxopropyl phosphate (1-amino-acetone-3-phosphate or AAP) to form pyridoxine 5'-phosphate (PNP) and inorganic phosphate. The protein is Pyridoxine 5'-phosphate synthase of Photobacterium profundum (strain SS9).